Consider the following 455-residue polypeptide: MFARFCKAIPAKGRAFPSVNASIQSRLMATVRNQRVPHERATFTIRDGPIFHGKSFGARTNISGEAVFTTSLVGYPESLTDPSYRGQILVFTQPLIGNYGVPSAERDQHGLLKYFESPHLQAAGVVVADVAEQYSHWTAVESLGEWCAREGVPAISGVDTRAIVTYLREQGSSLARITVGEEYDADQDEAFTDPEQIHLVRQVSTKAPFHVSAADPQCHVAVIDCGVKENILRSLVSRGASITVFPFDYPIHKVAHHFDGVFISNGPGDPTHCQDTTYHLRRLMETSQVPIFGICLGHQLLALAAGARTIKLKYGNRAHNIPALDMSTGRCHITSQNHGYAVDVDTLPSDWKPYFVNLNDSSNEGMIHKSRPIFSTQFHPEAKGGPLDSSYLFDIYIDSVRKYKANQAAFHPQRDSIPSPLLVDLLAKERVGVQPTIGMQNVQAAAAAAAVAAAA.

A mitochondrion-targeting transit peptide spans 1–28; that stretch reads MFARFCKAIPAKGRAFPSVNASIQSRLM. One can recognise a Glutamine amidotransferase type-1 domain in the interval 219–406; sequence HVAVIDCGVK…IDSVRKYKAN (188 aa). Cys-295 (nucleophile) is an active-site residue. Residues His-379 and Glu-381 contribute to the active site.

This sequence belongs to the CarA family. Heterodimer composed of 2 chains; the small (or glutamine) chain promotes the hydrolysis of glutamine to ammonia, which is used by the large (or ammonia) chain to synthesize carbamoyl phosphate.

The protein resides in the mitochondrion matrix. The catalysed reaction is hydrogencarbonate + L-glutamine + 2 ATP + H2O = carbamoyl phosphate + L-glutamate + 2 ADP + phosphate + 2 H(+). The enzyme catalyses L-glutamine + H2O = L-glutamate + NH4(+). It functions in the pathway amino-acid biosynthesis; L-arginine biosynthesis; carbamoyl phosphate from bicarbonate: step 1/1. Its function is as follows. Small subunit of the arginine-specific carbamoyl phosphate synthase (CPSase). CPSase catalyzes the formation of carbamoyl phosphate from the ammonia moiety of glutamine, carbonate, and phosphate donated by ATP, the first step of the arginine biosynthetic pathway. The small subunit (glutamine amidotransferase) binds and cleaves glutamine to supply the large subunit with the substrate ammonia. The protein is Carbamoyl phosphate synthase arginine-specific small chain (cpa1) of Aspergillus clavatus (strain ATCC 1007 / CBS 513.65 / DSM 816 / NCTC 3887 / NRRL 1 / QM 1276 / 107).